The chain runs to 133 residues: Hydrogenase maturation factor HypA (133 aa).

His2 contacts Ni(2+). Cys73, Cys75, Cys105, and Cys108 together coordinate Zn(2+).

It belongs to the HypA/HybF family.

Involved in the maturation of [NiFe] hydrogenases. Required for nickel insertion into the metal center of the hydrogenase. In Methanosarcina barkeri (strain Fusaro / DSM 804), this protein is Hydrogenase maturation factor HypA.